The primary structure comprises 396 residues: Elongation factor Tu (396 aa).

One can recognise a tr-type G domain in the interval 10–206 (KPHCNIGTIG…AVDAYIPQPE (197 aa)). The tract at residues 19–26 (GHVDHGKT) is G1. GTP is bound at residue 19 to 26 (GHVDHGKT). T26 provides a ligand contact to Mg(2+). The G2 stretch occupies residues 60–64 (GITIS). Positions 81–84 (DCPG) are G3. Residues 81 to 85 (DCPGH) and 136 to 139 (NKCD) each bind GTP. The tract at residues 136–139 (NKCD) is G4. A G5 region spans residues 174–176 (SAL).

It belongs to the TRAFAC class translation factor GTPase superfamily. Classic translation factor GTPase family. EF-Tu/EF-1A subfamily. In terms of assembly, monomer.

The protein resides in the cytoplasm. The catalysed reaction is GTP + H2O = GDP + phosphate + H(+). In terms of biological role, GTP hydrolase that promotes the GTP-dependent binding of aminoacyl-tRNA to the A-site of ribosomes during protein biosynthesis. In Rhodopseudomonas palustris (strain HaA2), this protein is Elongation factor Tu.